The chain runs to 543 residues: Cytochrome P450 52A1 (543 aa).

The Lumenal segment spans residues 1–28; the sequence is MSSSPSIAQEFLATITPYVEYCQENYTK. Residues 29–48 traverse the membrane as a helical segment; it reads WYYFIPLVILSLNLISMLHT. The Cytoplasmic portion of the chain corresponds to 49-543; that stretch reads KYLERKFKAK…GAEVQMYLIL (495 aa). C487 contacts heme.

It belongs to the cytochrome P450 family. It depends on heme as a cofactor.

It is found in the endoplasmic reticulum membrane. Functionally, together with an NADPH cytochrome P450 the enzyme system catalyzes the terminal hydroxylation as the first step in the assimilation of alkanes and fatty acids. The polypeptide is Cytochrome P450 52A1 (CYP52A1) (Candida tropicalis (Yeast)).